The following is a 665-amino-acid chain: Kinesin-like protein KIF22 (665 aa).

The region spanning 43 to 368 (RVRVAVRLRP…LNFAARSKEV (326 aa)) is the Kinesin motor domain. 127 to 134 (GPTGAGKT) is an ATP binding site. The tract at residues 379–428 (QPHALGPVKLSQKELLGPPEAKRARGPEEEEIGSPEPMAAPASASQKLSP) is disordered. Residues S412, S427, and S452 each carry the phosphoserine modification. The segment covering 412 to 428 (SPEPMAAPASASQKLSP) has biased composition (low complexity). Residue K465 forms a Glycyl lysine isopeptide (Lys-Gly) (interchain with G-Cter in SUMO2) linkage. Residues 465 to 508 (KRERMVLMKTVEEKDLEIERLKTKQKELEAKMLAQKAEEKENHC) adopt a coiled-coil conformation. A phosphoserine mark is found at S543, S562, and S581.

This sequence belongs to the TRAFAC class myosin-kinesin ATPase superfamily. Kinesin family. Interacts with FAM83D. Interacts with SIAH1. In terms of processing, ubiquitinated; mediated by SIAH1 and leading to its subsequent proteasomal degradation. As to expression, expressed in bone, cartilage, joint capsule, ligament, skin, and primary cultured chondrocytes.

It localises to the nucleus. The protein localises to the cytoplasm. Its subcellular location is the cytoskeleton. Kinesin family member that is involved in spindle formation and the movements of chromosomes during mitosis and meiosis. Binds to microtubules and to DNA. Plays a role in congression of laterally attached chromosomes in NDC80-depleted cells. This Homo sapiens (Human) protein is Kinesin-like protein KIF22 (KIF22).